A 700-amino-acid polypeptide reads, in one-letter code: Elongation factor G (700 aa).

In terms of domain architecture, tr-type G spans 8–290; it reads DKYRNIGISA…AVVELLPSPL (283 aa). Residues 17-24, 88-92, and 142-145 contribute to the GTP site; these read AHIDAGKT, DTPGH, and NKMD.

The protein belongs to the TRAFAC class translation factor GTPase superfamily. Classic translation factor GTPase family. EF-G/EF-2 subfamily.

The protein localises to the cytoplasm. Functionally, catalyzes the GTP-dependent ribosomal translocation step during translation elongation. During this step, the ribosome changes from the pre-translocational (PRE) to the post-translocational (POST) state as the newly formed A-site-bound peptidyl-tRNA and P-site-bound deacylated tRNA move to the P and E sites, respectively. Catalyzes the coordinated movement of the two tRNA molecules, the mRNA and conformational changes in the ribosome. The protein is Elongation factor G of Polynucleobacter necessarius subsp. necessarius (strain STIR1).